Consider the following 112-residue polypeptide: Divalent-cation tolerance protein CutA (112 aa).

Residues Cys-16, His-83, and His-84 each contribute to the Cu cation site.

The protein belongs to the CutA family. As to quaternary structure, homotrimer. The cofactor is Cu cation.

The protein resides in the cytoplasm. Involved in resistance toward heavy metals. This chain is Divalent-cation tolerance protein CutA, found in Shigella boydii serotype 18 (strain CDC 3083-94 / BS512).